The sequence spans 244 residues: 1-(5-phosphoribosyl)-5-[(5-phosphoribosylamino)methylideneamino] imidazole-4-carboxamide isomerase (244 aa).

The active-site Proton acceptor is D8. The active-site Proton donor is D129.

Belongs to the HisA/HisF family.

Its subcellular location is the cytoplasm. It carries out the reaction 1-(5-phospho-beta-D-ribosyl)-5-[(5-phospho-beta-D-ribosylamino)methylideneamino]imidazole-4-carboxamide = 5-[(5-phospho-1-deoxy-D-ribulos-1-ylimino)methylamino]-1-(5-phospho-beta-D-ribosyl)imidazole-4-carboxamide. The protein operates within amino-acid biosynthesis; L-histidine biosynthesis; L-histidine from 5-phospho-alpha-D-ribose 1-diphosphate: step 4/9. The sequence is that of 1-(5-phosphoribosyl)-5-[(5-phosphoribosylamino)methylideneamino] imidazole-4-carboxamide isomerase from Thermodesulfovibrio yellowstonii (strain ATCC 51303 / DSM 11347 / YP87).